A 560-amino-acid chain; its full sequence is Developmental and secondary metabolism regulator veA (560 aa).

The region spanning 35-241 (GRRLWYRMRV…AEQGCRVRIR (207 aa)) is the Velvet domain. The short motif at 49 to 54 (ERARAC) is the Nuclear localization signal element. 3 disordered regions span residues 49–70 (ERAR…VDPP), 171–197 (KEDK…ATGG), and 250–560 (DGKG…RLRY). Over residues 171–183 (KEDKDKDKERDVE) the composition is skewed to basic and acidic residues. The span at 336–355 (AAPPQPFAQPPSVPASPVYP) shows a compositional bias: pro residues. The span at 395–405 (PRRESIHHDYR) shows a compositional bias: basic and acidic residues. Positions 411-439 (QLPPLPPPPYYPPTPQQSHMPPPQPPQVL) are enriched in pro residues. Residues 444–453 (IDSNSKSNNR) show a composition bias toward polar residues. The PEST stretch occupies residues 455-496 (PMPSPTALANSAPRPLASLAPLAPLMQSTSSSAGKGPVHPAT). Over residues 461–479 (ALANSAPRPLASLAPLAPL) the composition is skewed to low complexity. Composition is skewed to basic and acidic residues over residues 508–535 (RAHD…RSED) and 546–560 (RRAD…RLRY).

It belongs to the velvet family. VeA subfamily. As to quaternary structure, component of the heterotrimeric velvet complex composed of laeA, veA and velB; VeA acting as a bridging protein between laeA and velB.

The protein localises to the nucleus. It is found in the cytoplasm. Component of the velvet transcription factor complex that controls sexual/asexual developmental ratio in response to light, promoting sexual development in the darkness while stimulating asexual sporulation under illumination. The velvet complex acts as a global regulator for secondary metabolite gene expression. Positively regulates chaetoglobosin A biosynthesis by controlling the expression of core genes of the chaetoglobosin A biosynthetic gene cluster and other relevant regulators in a light-dependent manner. VeA directly regulates transcription factors brlA, laeA, and the chaetoglobosin A cluster-specific transcription regulator cheR. Also directly regulates the expression of one of the chaetoglobosin A cluster cytochrome P450 monooxygenases (cheE or cheG), but only indirectly regulates the expression of the PKS-NRPS hybrid cheA. Moreover, VeA has a significant effect on the asexual spores production, irrespective of light or dark condition. This is Developmental and secondary metabolism regulator veA from Chaetomium globosum (strain ATCC 6205 / CBS 148.51 / DSM 1962 / NBRC 6347 / NRRL 1970) (Soil fungus).